We begin with the raw amino-acid sequence, 1113 residues long: Tudor domain-containing protein 7 (1113 aa).

HTH OST-type domains are found at residues Glu-3–Ala-76 and Lys-249–Lys-318. Over residues Glu-320–Pro-334 the composition is skewed to basic and acidic residues. Residues Glu-320–Val-352 form a disordered region. Residues Val-352–Leu-421 form the HTH OST-type 3 domain. Tudor domains lie at Thr-528–Leu-585 and Leu-718–Glu-775. The segment at Ser-873 to Ser-895 is disordered. Ser-874 is modified (phosphoserine). Residues Pro-875–Ala-884 are compositionally biased toward polar residues. Residues Gly-876 to Asn-1113 form an interaction with CDK17 region. The interval Thr-908 to Asn-1113 is interaction with CABLES1.

The protein belongs to the TDRD7 family. As to quaternary structure, found in a mRNP complex, at least composed of TDRD1, TDRD6, TDRD7 and DDX4. Found in a complex containing CABLES1, CDK16 and CDK17. Interacts with CABLES1, CDK17 and PIWIL1. In terms of tissue distribution, expressed in brain and testis.

It localises to the cytoplasm. Functionally, component of specific cytoplasmic RNA granules involved in post-transcriptional regulation of specific genes: probably acts by binding to specific mRNAs and regulating their translation. Required for lens transparency during lens development, by regulating translation of genes such as CRYBB3 and HSPB1 in the developing lens. Also required during spermatogenesis. This chain is Tudor domain-containing protein 7 (Tdrd7), found in Rattus norvegicus (Rat).